Here is a 261-residue protein sequence, read N- to C-terminus: Undecaprenyl-diphosphatase (261 aa).

A run of 8 helical transmembrane segments spans residues 1–21, 40–60, 79–99, 106–126, 140–160, 185–205, 210–230, and 239–259; these read MTVL…FLPI, GLTF…AYFW, GRLF…GVLF, IFRS…GLWW, VNLF…IPGV, FLMS…ELPL, LAFI…IKFL, and YLLF…VFWL.

It belongs to the UppP family.

The protein localises to the cell membrane. The enzyme catalyses di-trans,octa-cis-undecaprenyl diphosphate + H2O = di-trans,octa-cis-undecaprenyl phosphate + phosphate + H(+). Its function is as follows. Catalyzes the dephosphorylation of undecaprenyl diphosphate (UPP). Confers resistance to bacitracin. This Moorella thermoacetica (strain ATCC 39073 / JCM 9320) protein is Undecaprenyl-diphosphatase.